The following is a 223-amino-acid chain: MTPSELMPREKLLTYGANALTDQELLAIFLRTGIKGLPVMQLANQVLTTFGSLRALLTADLNAFCQIKGLGQTQFIQLQASKEMTKRYLAQQMQMCETINTPHLAIMYFQTELEFEEREVFMVLFLDNQNRLIKKEKMFYGTINQATVHPREIIKEALKCNAAAIIVAHNHPSGNCTASQADRQLTQKIKAACHLVEVRFVDHIIVGKGSYFSFEEERFHQNN.

An MPN domain is found at 98–220; sequence TINTPHLAIM…YFSFEEERFH (123 aa). Residues histidine 169, histidine 171, and aspartate 182 each coordinate Zn(2+). The short motif at 169–182 is the JAMM motif element; the sequence is HNHPSGNCTASQAD.

The protein belongs to the UPF0758 family.

In Haemophilus ducreyi (strain 35000HP / ATCC 700724), this protein is UPF0758 protein HD_0732.